Here is a 294-residue protein sequence, read N- to C-terminus: NAD kinase (294 aa).

Aspartate 73 (proton acceptor) is an active-site residue. Residues 73-74 (DG), 147-148 (NE), histidine 158, arginine 175, aspartate 177, 188-193 (TAYSLS), and glutamine 249 each bind NAD(+).

It belongs to the NAD kinase family. Requires a divalent metal cation as cofactor.

It localises to the cytoplasm. It carries out the reaction NAD(+) + ATP = ADP + NADP(+) + H(+). Its function is as follows. Involved in the regulation of the intracellular balance of NAD and NADP, and is a key enzyme in the biosynthesis of NADP. Catalyzes specifically the phosphorylation on 2'-hydroxyl of the adenosine moiety of NAD to yield NADP. The sequence is that of NAD kinase from Aeromonas salmonicida (strain A449).